Here is a 310-residue protein sequence, read N- to C-terminus: Acetylglutamate kinase (310 aa).

Substrate contacts are provided by residues 83–84, Arg105, and Asn207; that span reads GG.

It belongs to the acetylglutamate kinase family. ArgB subfamily.

Its subcellular location is the cytoplasm. The catalysed reaction is N-acetyl-L-glutamate + ATP = N-acetyl-L-glutamyl 5-phosphate + ADP. Its pathway is amino-acid biosynthesis; L-arginine biosynthesis; N(2)-acetyl-L-ornithine from L-glutamate: step 2/4. Its function is as follows. Catalyzes the ATP-dependent phosphorylation of N-acetyl-L-glutamate. The protein is Acetylglutamate kinase of Ralstonia nicotianae (strain ATCC BAA-1114 / GMI1000) (Ralstonia solanacearum).